Reading from the N-terminus, the 235-residue chain is Thiamine-phosphate synthase (235 aa).

4-amino-2-methyl-5-(diphosphooxymethyl)pyrimidine is bound by residues 50–54 (QLRDK) and Asn91. Positions 92 and 111 each coordinate Mg(2+). Ser130 serves as a coordination point for 4-amino-2-methyl-5-(diphosphooxymethyl)pyrimidine. Residue 160-162 (TPT) coordinates 2-[(2R,5Z)-2-carboxy-4-methylthiazol-5(2H)-ylidene]ethyl phosphate. 4-amino-2-methyl-5-(diphosphooxymethyl)pyrimidine is bound at residue Lys163. Gly191 contacts 2-[(2R,5Z)-2-carboxy-4-methylthiazol-5(2H)-ylidene]ethyl phosphate.

This sequence belongs to the thiamine-phosphate synthase family. Mg(2+) serves as cofactor.

It catalyses the reaction 2-[(2R,5Z)-2-carboxy-4-methylthiazol-5(2H)-ylidene]ethyl phosphate + 4-amino-2-methyl-5-(diphosphooxymethyl)pyrimidine + 2 H(+) = thiamine phosphate + CO2 + diphosphate. It carries out the reaction 2-(2-carboxy-4-methylthiazol-5-yl)ethyl phosphate + 4-amino-2-methyl-5-(diphosphooxymethyl)pyrimidine + 2 H(+) = thiamine phosphate + CO2 + diphosphate. The enzyme catalyses 4-methyl-5-(2-phosphooxyethyl)-thiazole + 4-amino-2-methyl-5-(diphosphooxymethyl)pyrimidine + H(+) = thiamine phosphate + diphosphate. It participates in cofactor biosynthesis; thiamine diphosphate biosynthesis; thiamine phosphate from 4-amino-2-methyl-5-diphosphomethylpyrimidine and 4-methyl-5-(2-phosphoethyl)-thiazole: step 1/1. In terms of biological role, condenses 4-methyl-5-(beta-hydroxyethyl)thiazole monophosphate (THZ-P) and 2-methyl-4-amino-5-hydroxymethyl pyrimidine pyrophosphate (HMP-PP) to form thiamine monophosphate (TMP). The polypeptide is Thiamine-phosphate synthase (Mycobacterium leprae (strain TN)).